The primary structure comprises 207 residues: Chloramphenicol acetyltransferase (207 aa).

The active-site Proton acceptor is His186.

Belongs to the chloramphenicol acetyltransferase family. As to quaternary structure, homotrimer.

The catalysed reaction is chloramphenicol + acetyl-CoA = chloramphenicol 3-acetate + CoA. In terms of biological role, this enzyme is an effector of chloramphenicol resistance in bacteria. The chain is Chloramphenicol acetyltransferase (catP) from Clostridium perfringens.